A 1225-amino-acid polypeptide reads, in one-letter code: Structural maintenance of chromosomes protein 1 (1225 aa).

Residue 33–40 (GPNGSGKS) coordinates ATP. A coiled-coil region spans residues 173-489 (SGSIQYKKEY…SANNQEYDLN (317 aa)). The region spanning 527-641 (PGVKGLVHDL…CNTLNIAKDL (115 aa)) is the SMC hinge domain. A coiled-coil region spans residues 679 to 1063 (KEEYQSLMSL…LKIKKKRKEL (385 aa)). Residues 1057-1061 (KKKRK) carry the Nuclear localization signal motif.

The protein belongs to the SMC family. SMC1 subfamily. Cohesin complexes are composed of the SMC1 and SMC3 heterodimer attached via their SMC hinge domain, MCD1/SCC1 which link them, and IRR1/SCC3, which interacts with MCD1. The cohesin complex also interacts with SCC2, which is required for its association with chromosomes.

The protein resides in the nucleus. It is found in the chromosome. Functionally, involved in chromosome cohesion during cell cycle and in DNA repair. Central component of cohesin complex. The cohesin complex is required for the cohesion of sister chromatids after DNA replication. The cohesin complex apparently forms a large proteinaceous ring within which sister chromatids can be trapped. At anaphase, the complex is cleaved and dissociates from chromatin, allowing sister chromatids to segregate. In Saccharomyces cerevisiae (strain ATCC 204508 / S288c) (Baker's yeast), this protein is Structural maintenance of chromosomes protein 1 (SMC1).